We begin with the raw amino-acid sequence, 598 residues long: MNPTNYDPRIGQPAQSRPQVSLSMGRRIVQMPTGLPRSYQDESHNEPVGWDEPSGVGGSSGAGGQQSDKPTGLRHFSTKVCEKVKEKGLTNYNEVADELVADYFQNNLIKQIDVVKQEYDMKNIRRRVYDALNVLLAMNIITKSKKDIRWIGLPASASQEISRLEEEKSRREASISSKKQALEEMVLQIVSYKNLVERNRKNEHKNGRPENDTVLHLPFLIINTDKEANVECSVSSDKSEFLFSFDKKFEIHDDFEILKKLNLACSLETTNPTAEEVKTAKSFLPTLHQHYVDEIIANRKKVEAEKEEKRKQQQLIADQMSMNLSQAQYVEPTSSLAQMSYSSRFNRQLQEHLINDGSEDRSAAAGIMERDYDMDKNVNQGSASRGPMYNTYSPQKIRAQVNTPLQVPPVTKRYYVQKTQGPMKHDMTPVVRTVNRPYSTVPPDRRLSTGATSVNSGPVKYYVPQGHQPMHQPVGQRYRVRPQQPQMSHMGQPHQVQQRVVYPAGSISGHQLQPGQRIVTQRIVAPGGPHPPGTIVRKVIRKIVVNNPKQSPAQQVIQKKMMEQDMCTFERKTEQPMTSAQAAALIQHPQPEEYDYFQ.

Disordered stretches follow at residues 1–73 (MNPT…PTGL), 435–457 (NRPY…VNSG), and 573–598 (TEQP…DYFQ). Polar residues predominate over residues 13 to 22 (PAQSRPQVSL). The span at 55–64 (GVGGSSGAGG) shows a compositional bias: gly residues.

Belongs to the E2F/DP family. Component of the DRM complex, at least composed of lin-9, lin-35, lin-37, lin-52, lin-53, lin-54- dpl-1 and efl-1. Interacts (via N-terminus) with efl-1. Interacts (via C-terminus) with lin-35 (via C-terminus).

It is found in the nucleus. Synthetic multivulva class B (synMuvB) protein. SynMuvB proteins are required to repress the induction of vulval development by Ras signaling and probably act by forming the multiprotein DRM complex that represses transcription. May also negatively regulate vulval development in association with other SynMuv class B proteins such as lin-15A. Can stimulate E2F-dependent transcription. Plays a role in negatively regulating the progression through the G1 phase of the cell cycle during postembryonic development, most likely by acting as a transcriptional repressor in association with the cell cycle regulatory factor efl-1 and the transcriptional repressor lin-35, but may also act as a positive regulator of cell cycle entry. Involved in the regulation of intestinal cell division during postembryonic development, most likely in complex with efl-1 and lin-35. Promotes germ cell programmed cell death, probably together with efl-1, by positively regulating the expression of the apoptosis proteins ced-3 and ced-4. In particular, positively regulates the expression of ced-4 in response to starvation. Its role in programmed cell death may be in conjunction with cell cycle regulatory factor efl-1 and the synthetic multivulva class B proteins lin-35, lin-37 and lin-52, and is independent of the ced-1, ced-8 and ced-9 pathways. This is Transcription factor dpl-1 from Caenorhabditis elegans.